Consider the following 232-residue polypeptide: Lipoprotein-releasing system ATP-binding protein LolD (232 aa).

Residues 11-231 (VYLHDIKREY…SLENGHVVEL (221 aa)) form the ABC transporter domain. 47 to 54 (APSGSGKS) contacts ATP.

Belongs to the ABC transporter superfamily. Lipoprotein translocase (TC 3.A.1.125) family. In terms of assembly, the complex is composed of two ATP-binding proteins (LolD) and two transmembrane proteins (LolC and LolE).

The protein localises to the cell inner membrane. Its function is as follows. Part of the ABC transporter complex LolCDE involved in the translocation of mature outer membrane-directed lipoproteins, from the inner membrane to the periplasmic chaperone, LolA. Responsible for the formation of the LolA-lipoprotein complex in an ATP-dependent manner. In Nitrobacter winogradskyi (strain ATCC 25391 / DSM 10237 / CIP 104748 / NCIMB 11846 / Nb-255), this protein is Lipoprotein-releasing system ATP-binding protein LolD.